The primary structure comprises 203 residues: 8-oxoguanine DNA glycosylase/AP lyase (203 aa).

Residues Lys-128 and Asp-146 contribute to the active site.

The protein belongs to the type-2 OGG1 family.

It catalyses the reaction 2'-deoxyribonucleotide-(2'-deoxyribose 5'-phosphate)-2'-deoxyribonucleotide-DNA = a 3'-end 2'-deoxyribonucleotide-(2,3-dehydro-2,3-deoxyribose 5'-phosphate)-DNA + a 5'-end 5'-phospho-2'-deoxyribonucleoside-DNA + H(+). Catalyzes the excision of an oxidatively damaged form of guanine (7,8-dihydro-8-oxoguanine = 8-oxoG) from DNA. Also cleaves the DNA backbone at apurinic/apyrimidinic sites (AP sites). The chain is 8-oxoguanine DNA glycosylase/AP lyase from Sulfolobus acidocaldarius (strain ATCC 33909 / DSM 639 / JCM 8929 / NBRC 15157 / NCIMB 11770).